We begin with the raw amino-acid sequence, 111 residues long: Transcription and mRNA export factor SUS1 (111 aa).

This sequence belongs to the ENY2 family. Component of the nuclear pore complex (NPC)-associated TREX-2 complex (transcription and export complex 2), composed of at least SUS1, SAC3, THP1, SEM1, and CDC31. TREX-2 contains 2 SUS1 chains. The TREX-2 complex interacts with the nucleoporin NUP1. Component of the 1.8 MDa SAGA transcription coactivator-HAT complex. SAGA is built of 5 distinct domains with specialized functions. Within the SAGA complex, SUS1, SGF11, SGF73 and UBP8 form an additional subcomplex of SAGA called the DUB module (deubiquitination module). Interacts directly with THP1, SAC3, SGF11, and with the RNA polymerase II.

Its subcellular location is the nucleus. It localises to the nucleoplasm. The protein localises to the cytoplasm. The protein resides in the P-body. Functionally, involved in mRNA export coupled transcription activation by association with both the TREX-2 and the SAGA complexes. At the promoters, SAGA is required for recruitment of the basal transcription machinery. It influences RNA polymerase II transcriptional activity through different activities such as TBP interaction and promoter selectivity, interaction with transcription activators, and chromatin modification through histone acetylation and deubiquitination. Within the SAGA complex, participates in a subcomplex required for deubiquitination of H2B and for the maintenance of steady-state H3 methylation levels. The TREX-2 complex functions in docking export-competent ribonucleoprotein particles (mRNPs) to the nuclear entrance of the nuclear pore complex (nuclear basket). TREX-2 participates in mRNA export and accurate chromatin positioning in the nucleus by tethering genes to the nuclear periphery. May also be involved in cytoplasmic mRNA decay by interaction with components of P-bodies. The chain is Transcription and mRNA export factor SUS1 from Lodderomyces elongisporus (strain ATCC 11503 / CBS 2605 / JCM 1781 / NBRC 1676 / NRRL YB-4239) (Yeast).